The sequence spans 81 residues: Putative defensin-like protein 265 (81 aa).

The N-terminal stretch at 1 to 26 is a signal peptide; that stretch reads MEKTVSRKVVVLAILLSLSCLCIAKA. 3 disulfide bridges follow: cysteine 48–cysteine 66, cysteine 54–cysteine 71, and cysteine 58–cysteine 73.

This sequence belongs to the DEFL family.

It is found in the secreted. The chain is Putative defensin-like protein 265 from Arabidopsis thaliana (Mouse-ear cress).